The sequence spans 365 residues: WAT1-related protein At4g01430 (365 aa).

The next 10 membrane-spanning stretches (helical) occupy residues 7 to 27, 39 to 59, 76 to 96, 100 to 120, 132 to 152, 183 to 203, 216 to 236, 250 to 270, 280 to 300, and 305 to 325; these read WAPVIVMLISSVAMGSVNALV, IFGAYRMAISALILVPFSYIW, FISGLLGASLMQFFFLLGLSY, TVSMALVSMLPAITFALALIF, AGVLKVMGTLICIMGAMLLTF, WLLGCLYLVIGTVLLSLWMLF, YSSTCLMSVFASFQCAILSLY, FVILVTLYAGIVGQAMSTVVT, VFVSTFSPVSLVAATLFDFLI, and LYLGSILGSVVTITGLYVFLW. An EamA 1 domain is found at 20-151; sequence MGSVNALVKK…ICIMGAMLLT (132 aa). The region spanning 216–324 is the EamA 2 domain; that stretch reads YSSTCLMSVF…VTITGLYVFL (109 aa). A disordered region spans residues 339-365; it reads LNSSQFSQNKDNEDHTIANHKDTNLPV. Residues 348 to 365 show a composition bias toward basic and acidic residues; sequence KDNEDHTIANHKDTNLPV.

Belongs to the drug/metabolite transporter (DMT) superfamily. Plant drug/metabolite exporter (P-DME) (TC 2.A.7.4) family.

Its subcellular location is the membrane. The protein is WAT1-related protein At4g01430 of Arabidopsis thaliana (Mouse-ear cress).